The sequence spans 721 residues: MELGKGKLLRTGLNALHQAVHPIHGLAWTDGNQVVLTDLRLHSGEVKFGDSKVIGQFECVCGLSWAPPVADDTPVLLAVQHEKHVTVWQLCPSPMESSKWLTSQTCEIRGSLPILPQGCVWHPKCAILTVLTAQDVSIFPNVHSDDSQVKADINTQGRIHCACWTQDGLRLVVAVGSSLHSYIWDSAQKTLHRCSSCLVFDVDSHVCSITATVDSQVAIATELPLDKICGLNASETFNIPPNSKDMTPYALPVIGEVRSMDKEATDSETNSEVSVSSSYLEPLDLTHIHFNQHKSEGNSLICLRKKDYLTGTGQDSSHLVLVTFKKAVTMTRKVTIPGILVPDLIAFNLKAHVVAVASNTCNIILIYSVIPSSVPNIQQIRLENTERPKGICFLTDQLLLILVGKQKLTDTTFLPSSKSDQYAISLIVREIMLEEEPSITSGESQTTYSTFSAPLNKANRKKLIESLSPDFCHQNKGLLLTVNTSSQNGRPGRTLIKEIQSPLSSICDGSIALDAEPVTQPASLPRHSSTPDHTSTLEPPRLPQRKNLQSEKETYQLSKEVEILSRNLVEMQRCLSELTNRLHNGKKSSSVYPLSQDLPYVHIIYQKPYYLGPVVEKRAVLLCDGKLRLSTVQQTFGLSLIEMLHDSHWILLSADSEGFIPLTFTATQEIIIRDGSLSRSDVFRDSFSHSPGAVSSLKVFTGLAAPSLDTTGCCNHVDGMA.

Position 1 is an N-acetylmethionine (Met1). WD repeat units follow at residues 55-98 (GQFE…MESS) and 154-194 (NTQG…LHRC). 4 positions are modified to phosphoserine: Ser299, Ser468, Ser501, and Ser523. A compositionally biased stretch (polar residues) spans 520-537 (QPASLPRHSSTPDHTSTL). Residues 520–553 (QPASLPRHSSTPDHTSTLEPPRLPQRKNLQSEKE) are disordered. Thr530 is subject to Phosphothreonine. The interaction with HCK stretch occupies residues 539–545 (PPRLPQR). Residues 556 to 584 (QLSKEVEILSRNLVEMQRCLSELTNRLHN) are a coiled coil. 2 positions are modified to phosphoserine: Ser686 and Ser690.

Oligomer. Interacts with HCK (via SH3 domain). Post-translationally, phosphorylated on Tyr when associated with HCK.

This Homo sapiens (Human) protein is WD repeat and coiled-coil-containing protein.